Here is a 110-residue protein sequence, read N- to C-terminus: Glycine cleavage system H-like protein (110 aa).

A Lipoyl-binding domain is found at 10–97 (VEKVGDLYVF…PEENWLFKLD (88 aa)). Asp27 carries the ADP-ribosyl aspartic acid modification. Lys56 bears the N6-lipoyllysine mark.

In terms of assembly, lipoylated GcvH-L directly interacts with SAV0325, which reverses the SirTM-mediated mono-ADP-ribosylation of GcvH-L, and with the oxidoreductase SAV0322. In terms of processing, is lipoylated on K-56 by LplA2 (SAV0327) and then mono-ADP-ribosylated, probably on D-27, by SirTM (SAV0326). The mono-ADP-ribosylation state of GcvH-L might regulate the availability of the lipoyl moiety for redox reactions; ADP-ribosylation would inhibit the interaction of the oxidoreductase with GcvH-L when it is not required, thus ADP-ribosylation of GcvH-L might be acting to keep the response 'off' under non-stress conditions.

May act as a carrier protein for the ROS scavenging lipoyl moiety and/or as a substrate for oxidoreductases such as SAV0322 and SAV0323. This Staphylococcus aureus (strain Mu50 / ATCC 700699) protein is Glycine cleavage system H-like protein.